A 437-amino-acid chain; its full sequence is ATP-dependent RNA helicase RhlB (437 aa).

Positions 9–37 match the Q motif motif; that stretch reads QKFADLGLKPQVTEGLEKKGFEYCTPIQA. A Helicase ATP-binding domain is found at 40–219; that stretch reads LPVLLTGQDI…FEHMHNPEHV (180 aa). 53–60 is an ATP binding site; the sequence is AQTGTGKT. A DEAD box motif is present at residues 165 to 168; it reads DEAD. Residues 245–390 enclose the Helicase C-terminal domain; it reads ALLQTLIEEE…VSDYDASALI (146 aa). The interval 395-437 is disordered; the sequence is APLRMRAPRTQQRRTNTGGTRSGNRKPQGRRPRQPRQSAPKQS. The span at 403 to 413 shows a compositional bias: low complexity; that stretch reads RTQQRRTNTGG. A compositionally biased stretch (basic residues) spans 417–428; sequence GNRKPQGRRPRQ.

This sequence belongs to the DEAD box helicase family. RhlB subfamily. Component of the RNA degradosome, which is a multiprotein complex involved in RNA processing and mRNA degradation.

Its subcellular location is the cytoplasm. It catalyses the reaction ATP + H2O = ADP + phosphate + H(+). In terms of biological role, DEAD-box RNA helicase involved in RNA degradation. Has RNA-dependent ATPase activity and unwinds double-stranded RNA. This Vibrio campbellii (strain ATCC BAA-1116) protein is ATP-dependent RNA helicase RhlB.